We begin with the raw amino-acid sequence, 256 residues long: Hemin import ATP-binding protein HmuV (256 aa).

One can recognise an ABC transporter domain in the interval isoleucine 2 to aspartate 238. Glycine 34–serine 41 contacts ATP.

The protein belongs to the ABC transporter superfamily. Heme (hemin) importer (TC 3.A.1.14.5) family. In terms of assembly, the complex is composed of two ATP-binding proteins (HmuV), two transmembrane proteins (HmuU) and a solute-binding protein (HmuT).

Its subcellular location is the cell inner membrane. Part of the ABC transporter complex HmuTUV involved in hemin import. Responsible for energy coupling to the transport system. This is Hemin import ATP-binding protein HmuV from Escherichia coli O157:H7.